The sequence spans 560 residues: Formate--tetrahydrofolate ligase (560 aa).

T69–S76 is a binding site for ATP.

The protein belongs to the formate--tetrahydrofolate ligase family.

It catalyses the reaction (6S)-5,6,7,8-tetrahydrofolate + formate + ATP = (6R)-10-formyltetrahydrofolate + ADP + phosphate. It participates in one-carbon metabolism; tetrahydrofolate interconversion. The chain is Formate--tetrahydrofolate ligase from Listeria innocua serovar 6a (strain ATCC BAA-680 / CLIP 11262).